Reading from the N-terminus, the 1222-residue chain is ATP-dependent helicase/nuclease subunit A (1222 aa).

A UvrD-like helicase ATP-binding domain is found at 27-483 (HLQENERCRD…RDYQKKPEQG (457 aa)). 48–55 (AIYTSGQN) provides a ligand contact to ATP. The UvrD-like helicase C-terminal domain maps to 512-798 (ESVGDVLYDE…ADVEVATPKQ (287 aa)).

The protein belongs to the helicase family. AddA subfamily. In terms of assembly, heterodimer of AddA and AddB/RexB. Mg(2+) is required as a cofactor.

The enzyme catalyses Couples ATP hydrolysis with the unwinding of duplex DNA by translocating in the 3'-5' direction.. The catalysed reaction is ATP + H2O = ADP + phosphate + H(+). In terms of biological role, the heterodimer acts as both an ATP-dependent DNA helicase and an ATP-dependent, dual-direction single-stranded exonuclease. Recognizes the chi site generating a DNA molecule suitable for the initiation of homologous recombination. The AddA nuclease domain is required for chi fragment generation; this subunit has the helicase and 3' -&gt; 5' nuclease activities. In Streptococcus pyogenes serotype M1, this protein is ATP-dependent helicase/nuclease subunit A.